A 342-amino-acid chain; its full sequence is tRNA N6-adenosine threonylcarbamoyltransferase (342 aa).

The Fe cation site is built by His112 and His116. Substrate-binding positions include 134–138, Asp167, Gly180, and Asn278; that span reads IVSGG. Asp306 contributes to the Fe cation binding site.

The protein belongs to the KAE1 / TsaD family. The cofactor is Fe(2+).

Its subcellular location is the cytoplasm. It catalyses the reaction L-threonylcarbamoyladenylate + adenosine(37) in tRNA = N(6)-L-threonylcarbamoyladenosine(37) in tRNA + AMP + H(+). Required for the formation of a threonylcarbamoyl group on adenosine at position 37 (t(6)A37) in tRNAs that read codons beginning with adenine. Is involved in the transfer of the threonylcarbamoyl moiety of threonylcarbamoyl-AMP (TC-AMP) to the N6 group of A37, together with TsaE and TsaB. TsaD likely plays a direct catalytic role in this reaction. The chain is tRNA N6-adenosine threonylcarbamoyltransferase from Anaplasma phagocytophilum (strain HZ).